A 433-amino-acid polypeptide reads, in one-letter code: Trigger factor (433 aa).

One can recognise a PPIase FKBP-type domain in the interval 163–248; that stretch reads GDFVTFDFKG…IKEIKVKELP (86 aa).

The protein belongs to the FKBP-type PPIase family. Tig subfamily.

The protein localises to the cytoplasm. It catalyses the reaction [protein]-peptidylproline (omega=180) = [protein]-peptidylproline (omega=0). Its function is as follows. Involved in protein export. Acts as a chaperone by maintaining the newly synthesized protein in an open conformation. Functions as a peptidyl-prolyl cis-trans isomerase. The protein is Trigger factor of Geotalea uraniireducens (strain Rf4) (Geobacter uraniireducens).